A 644-amino-acid polypeptide reads, in one-letter code: Exoribonuclease 2 (644 aa).

The RNB domain occupies 189 to 516; it reads RRDLTALDFV…NHRLLKAIIK (328 aa). An S1 motif domain is found at 561-643; that stretch reads DTRFAAEILD…ETRSIIARPA (83 aa).

It belongs to the RNR ribonuclease family. RNase II subfamily.

It is found in the cytoplasm. It carries out the reaction Exonucleolytic cleavage in the 3'- to 5'-direction to yield nucleoside 5'-phosphates.. Involved in mRNA degradation. Hydrolyzes single-stranded polyribonucleotides processively in the 3' to 5' direction. The sequence is that of Exoribonuclease 2 from Klebsiella pneumoniae (strain 342).